The sequence spans 113 residues: MTTSFYFLLVALGLLLYVCQSSFGNQHTRNSDTPKHRCGSELADQYVQLCHGKRNDAGKKRGRASPLWQRQGFLSMLKAKRNEAFFLQRDGRGIVEVCCDNPCTVATLMTFCH.

The first 21 residues, 1-21, serve as a signal peptide directing secretion; the sequence is MTTSFYFLLVALGLLLYVCQS. Residues 22–29 constitute a propeptide that is removed on maturation; it reads SFGNQHTR. Pro34 carries the 4-hydroxyproline; partial modification. 3 cysteine pairs are disulfide-bonded: Cys38–Cys99, Cys50–Cys112, and Cys98–Cys103. 4-carboxyglutamate is present on Glu41. His51 carries the histidine amide modification. Positions 52-92 are cleaved as a propeptide — c peptide; it reads GKRNDAGKKRGRASPLWQRQGFLSMLKAKRNEAFFLQRDGR. Glu96 is modified (4-carboxyglutamate). Pro102 carries the post-translational modification 4-hydroxyproline; partial.

The protein belongs to the insulin family. As to quaternary structure, heterodimer of A and B chains; disulfide-linked. Post-translationally, it is noteworthy that in this dimer, in contrast to Con-Ins G1, the chain B is amidated and not the chain A. In terms of tissue distribution, expressed by the venom gland.

It localises to the secreted. Functionally, this venom insulin, from a fish-hunting cone snail, facilitates prey capture by rapidly inducing hypoglycemic shock. It is one of the smallest known insulin found in nature and lacks the C-terminal segment of the B chain that, in human insulin, mediates engagement of the insulin receptor (INSR) and assembly of the hormone's hexameric storage form. Despite lacking this segment, it both binds and activates human insulin receptor (long isoform (HIR-B)) with only a 10-fold lower potency. In vivo, intraperitoneal injection of this peptide into zebrafish lowers blood glucose with the same potency than human insulin. In addition, when applied to water, this peptide reduces overall locomotor activity of zebrafish larvae, observed as a significant decrease in the percentage of time spent swimming and movement frequency. The sequence is that of Con-Ins G3b from Conus geographus (Geography cone).